Reading from the N-terminus, the 379-residue chain is Cytochrome b (379 aa).

4 helical membrane-spanning segments follow: residues 33-53, 77-98, 113-133, and 178-198; these read FGSL…FLAM, WTIR…FIHV, WNIG…GYVL, and FFAL…IHLL. Residues His-83 and His-97 each coordinate heme b. His-182 and His-196 together coordinate heme b. His-201 is a binding site for a ubiquinone. The next 4 helical transmembrane spans lie at 226-246, 288-308, 320-340, and 347-367; these read TKDF…TLFY, LGGV…PFLQ, LSQF…WIGG, and FISI…FIMP.

The protein belongs to the cytochrome b family. As to quaternary structure, the cytochrome bc1 complex contains 11 subunits: 3 respiratory subunits (MT-CYB, CYC1 and UQCRFS1), 2 core proteins (UQCRC1 and UQCRC2) and 6 low-molecular weight proteins (UQCRH/QCR6, UQCRB/QCR7, UQCRQ/QCR8, UQCR10/QCR9, UQCR11/QCR10 and a cleavage product of UQCRFS1). This cytochrome bc1 complex then forms a dimer. The cofactor is heme b.

It localises to the mitochondrion inner membrane. Component of the ubiquinol-cytochrome c reductase complex (complex III or cytochrome b-c1 complex) that is part of the mitochondrial respiratory chain. The b-c1 complex mediates electron transfer from ubiquinol to cytochrome c. Contributes to the generation of a proton gradient across the mitochondrial membrane that is then used for ATP synthesis. The chain is Cytochrome b (MT-CYB) from Lepilemur randrianasoloi (Randrianasoli's sportive lemur).